Consider the following 338-residue polypeptide: UPF0284 protein TV0153 (338 aa).

It belongs to the UPF0284 family.

The chain is UPF0284 protein TV0153 from Thermoplasma volcanium (strain ATCC 51530 / DSM 4299 / JCM 9571 / NBRC 15438 / GSS1).